The following is a 468-amino-acid chain: MSIRAKRRKRASPTDLYRTCKQAGTCPPDIIPRVEQNTLADKILKWGSLGVFFGGLGIGTGSGTGGRTGYIPVGSRPTTVVDIGPTPRPPVIIEPVGASEPSIVTLVEDSSIINAGASHPTFTGTGGFEVTTSTVTDPAVLDITPSGTSVQVSSSSFLNPLYTEPAIVEAPQTGEVSGHVLVSTATSGSHGYEEIPMQTFATSGGSGTEPISSTPLPGVRRVAGPRLYSRANQQVQVRDPAFLARPADLVTFDNPVYDPEETIIFQHPDLHEPPDPDFLDIVALHRPALTSRRGTVRFSRLGRRATLRTRSGKQIGARVHFYHDISPIGTEELEMEPLLPPASTDNTDMLYDVYADSDVLQPLLDELPAAPRGSLSLADTAVSATSASTLRGSTTVPLSSGIDVPVYTGPDIEPPNVPGMGPLIPVAPSLPSSVYIFGGDYYLMPSYVLWPKRRKRVHYFFADGFVAA.

A Nuclear localization signal motif is present at residues 1-11 (MSIRAKRRKRA). A disulfide bridge links Cys-20 with Cys-26. The Nuclear localization signal motif lies at 449 to 457 (LWPKRRKRV).

This sequence belongs to the papillomaviridae L2 protein family. Interacts with major capsid protein L1. Interacts with E2; this interaction inhibits E2 transcriptional activity but not the DNA replication function E2. Interacts with host GADD45GIP1. Interacts with host HSPA8; this interaction is required for L2 nuclear translocation. Interacts with host importins KPNB2 and KPNB3. Forms a complex with importin alpha2-beta1 heterodimers via interaction with the importin alpha2 adapter. Interacts with host DYNLT1; this interaction is essential for virus intracellular transport during entry. Interacts (via C-terminus) with host retromer subunits VPS35 and VPS29. Post-translationally, highly phosphorylated.

It is found in the virion. The protein localises to the host nucleus. Its subcellular location is the host early endosome. It localises to the host Golgi apparatus. Minor protein of the capsid that localizes along the inner surface of the virion, within the central cavities beneath the L1 pentamers. Plays a role in capsid stabilization through interaction with the major capsid protein L1. Once the virion enters the host cell, L2 escorts the genomic DNA into the nucleus by promoting escape from the endosomal compartments and traffic through the host Golgi network. Mechanistically, the C-terminus of L2 possesses a cell-penetrating peptide that protudes from the host endosome, interacts with host cytoplasmic retromer cargo and thereby mediates the capsid delivery to the host trans-Golgi network. Plays a role through its interaction with host dynein in the intracellular microtubule-dependent transport of viral capsid toward the nucleus. Mediates the viral genome import into the nucleus through binding to host importins. Once within the nucleus, L2 localizes viral genomes to host PML bodies in order to activate early gene expression for establishment of infection. Later on, promotes late gene expression by interacting with the viral E2 protein and by inhibiting its transcriptional activation functions. During virion assembly, encapsidates the genome by direct interaction with the viral DNA. The chain is Minor capsid protein L2 from Human papillomavirus type 2a.